The primary structure comprises 55 residues: uncharacterized protein (55 aa).

This is an uncharacterized protein from Sulfolobus islandicus rod-shaped virus 1 (SIRV-1).